A 460-amino-acid chain; its full sequence is Decaprenylphosphoryl-beta-D-ribose oxidase (460 aa).

The FAD-binding PCMH-type domain occupies 19 to 193 (TAPTVASVLS…LRATIEMTPT (175 aa)). FAD-binding positions include 52–62 (ARGLGRSYGDN), Gly116, 121–124 (TVGG), 128–131 (CDIH), Ile183, and Tyr414.

This sequence belongs to the DprE1 family. Monomer. Interacts with DprE2 to form an epimerase complex.

It is found in the periplasm. The enzyme catalyses trans,octa-cis-decaprenylphospho-beta-D-ribofuranose + FAD + H(+) = trans,octa-cis-decaprenylphospho-beta-D-erythro-pentofuranosid-2-ulose + FADH2. Its pathway is cell wall biogenesis; cell wall polysaccharide biosynthesis. Its activity is regulated as follows. Is inhibited by 8-nitro-benzothiazinones (BTZs) such as BTZ043; BTZs are a new class of antimycobacterial agents that block formation of both cell-wall lipoarabinomannan and arabinogalactan via inhibition of decaprenyl-phospho-arabinose (DPA) synthesis. BTZs are suicide inhibitors that act via covalent modification of DprE1; the essential nitro group of these compounds is reduced by DprE1 to a nitroso group, which then specifically reacts with Cys-386 of DprE1 to form an irreversible semimercaptal adduct. Other compounds with diverse scaffolds (dinitrobenzamides and nitrobenzoquinoxalines) also act as covalent DprE1 inhibitors. Functionally, component of the DprE1-DprE2 complex that catalyzes the 2-step epimerization of decaprenyl-phospho-ribose (DPR) to decaprenyl-phospho-arabinose (DPA), a key precursor that serves as the arabinose donor required for the synthesis of cell-wall arabinans. DprE1 catalyzes the first step of epimerization, namely FAD-dependent oxidation of the C2' hydroxyl of DPR to yield the keto intermediate decaprenyl-phospho-2'-keto-D-arabinose (DPX). The intermediate DPX is then transferred to DprE2 subunit of the epimerase complex, most probably through a 'substrate channel' at the interface of DprE1-DprE2 complex. Can also use farnesyl-phosphoryl-beta-D-ribofuranose (FPR) as substrate in vitro. Appears to be essential for the growth of M.smegmatis. In Mycolicibacterium smegmatis (strain ATCC 700084 / mc(2)155) (Mycobacterium smegmatis), this protein is Decaprenylphosphoryl-beta-D-ribose oxidase.